The sequence spans 461 residues: Argininosuccinate lyase (461 aa).

The protein belongs to the lyase 1 family. Argininosuccinate lyase subfamily.

The protein localises to the cytoplasm. It carries out the reaction 2-(N(omega)-L-arginino)succinate = fumarate + L-arginine. It functions in the pathway amino-acid biosynthesis; L-arginine biosynthesis; L-arginine from L-ornithine and carbamoyl phosphate: step 3/3. The chain is Argininosuccinate lyase from Symbiobacterium thermophilum (strain DSM 24528 / JCM 14929 / IAM 14863 / T).